Here is a 328-residue protein sequence, read N- to C-terminus: Interleukin-12 subunit beta (328 aa).

Residues 1 to 22 (MCHQQLVISWFSLVFLASPLMA) form the signal peptide. In terms of domain architecture, Ig-like C2-type spans 29–106 (DVYVVELDWY…LSHSLLLLHK (78 aa)). A disulfide bridge connects residues C50 and C90. N-linked (GlcNAc...) asparagine glycosylation is found at N125, N135, and N222. In terms of domain architecture, Fibronectin type-III spans 237–328 (PPKNLQLKPL…WSEWASVPCS (92 aa)).

It belongs to the IL-12B family. Heterodimer with IL12A; disulfide-linked. The heterodimer is known as interleukin IL-12. Heterodimer with IL23A; disulfide-linked. The heterodimer is known as interleukin IL-23. Also secreted as a monomer. Interacts with NBR1; this interaction promotes IL-12 secretion.

It localises to the secreted. Its function is as follows. Cytokine that can act as a growth factor for activated T and NK cells, enhance the lytic activity of NK/lymphokine-activated killer cells, and stimulate the production of IFN-gamma by resting PBMC. Functionally, associates with IL23A to form the IL-23 interleukin, a heterodimeric cytokine which functions in innate and adaptive immunity. IL-23 may constitute with IL-17 an acute response to infection in peripheral tissues. IL-23 binds to a heterodimeric receptor complex composed of IL12RB1 and IL23R, activates the Jak-Stat signaling cascade, stimulates memory rather than naive T-cells and promotes production of pro-inflammatory cytokines. IL-23 induces autoimmune inflammation and thus may be responsible for autoimmune inflammatory diseases and may be important for tumorigenesis. The protein is Interleukin-12 subunit beta (IL12B) of Macaca mulatta (Rhesus macaque).